Consider the following 533-residue polypeptide: Beta-1,4 N-acetylgalactosaminyltransferase 1 (533 aa).

Residues 1-7 (MRLDRRA) lie on the Cytoplasmic side of the membrane. A helical; Signal-anchor for type II membrane protein membrane pass occupies residues 8 to 25 (LYALVLLLACASLGLLYA). The Lumenal portion of the chain corresponds to 26-533 (STRDAPGLPN…KHRLQCMTAE (508 aa)). 2 N-linked (GlcNAc...) asparagine glycosylation sites follow: asparagine 79 and asparagine 274. Residues cysteine 429 and cysteine 476 are joined by a disulfide bond.

The protein belongs to the glycosyltransferase 2 family. In terms of assembly, homodimer; disulfide-linked. In terms of tissue distribution, strongly expressed in brain, testis, spleen, and to a lesser extent in liver.

It is found in the golgi apparatus membrane. The enzyme catalyses a ganglioside GM3 (d18:1(4E)) + UDP-N-acetyl-alpha-D-galactosamine = a ganglioside GM2 (d18:1(4E)) + UDP + H(+). It catalyses the reaction a ganglioside GD3 (d18:1(4E)) + UDP-N-acetyl-alpha-D-galactosamine = a ganglioside GD2 (d18:1(4E)) + UDP + H(+). The catalysed reaction is a ganglioside GM3 + UDP-N-acetyl-alpha-D-galactosamine = a ganglioside GM2 + UDP + H(+). It carries out the reaction a ganglioside GD3 + UDP-N-acetyl-alpha-D-galactosamine = a ganglioside GD2 + UDP + H(+). The enzyme catalyses a ganglioside GD1a + UDP-N-acetyl-alpha-D-galactosamine = a ganglioside GalNAc-GD1a + UDP + H(+). It catalyses the reaction a ganglioside GT3 (d18:1(4E)) + UDP-N-acetyl-alpha-D-galactosamine = a ganglioside GT2 (d18:1(4E)) + UDP + H(+). The catalysed reaction is a beta-D-Gal-(1-&gt;4)-beta-D-Glc-(1&lt;-&gt;1)-Cer(d18:1(4E)) + UDP-N-acetyl-alpha-D-galactosamine = a ganglioside GA2 (d18:1(4E)) + UDP + H(+). It carries out the reaction a neolactoside IV(3)-alpha-NeuGc-nLc4Cer + UDP-N-acetyl-alpha-D-galactosamine = a neolactoside IV(4)-beta-GalNAc-IV(3)-alpha-NeuGc-nLc4Cer + UDP + H(+). It participates in sphingolipid metabolism. Functionally, involved in the biosynthesis of gangliosides GM2, GD2, GT2 and GA2 from GM3, GD3, GT3 and GA3, respectively. In Rattus norvegicus (Rat), this protein is Beta-1,4 N-acetylgalactosaminyltransferase 1.